Reading from the N-terminus, the 289-residue chain is Kinetochore-associated protein MTW1 (289 aa).

The stretch at Arg-105–Arg-147 forms a coiled coil.

The protein belongs to the mis12 family. In terms of assembly, component of the MIND kinetochore complex, which is composed of at least MTW1, NNF1, NSL1 and DSN1.

The protein localises to the chromosome. Its subcellular location is the centromere. It localises to the kinetochore. The protein resides in the cytoplasm. It is found in the cytoskeleton. The protein localises to the spindle pole. Acts as an essential component of the kinetochore MIND complex, which is required for the spindle checkpoint and kinetochore integrity. MIND plays a role in establishing a bipolar spindle-kinetochore interaction by joining kinetochore subunits contacting DNA to those contacting microtubules. In Saccharomyces cerevisiae (strain ATCC 204508 / S288c) (Baker's yeast), this protein is Kinetochore-associated protein MTW1 (MTW1).